The sequence spans 456 residues: Phosphomethylpyrimidine synthase (456 aa).

Residues asparagine 80, methionine 109, tyrosine 139, histidine 175, 195-197, 236-239, and glutamate 275 each bind substrate; these read SRG and DSLR. Residue histidine 279 participates in Zn(2+) binding. Residue tyrosine 302 coordinates substrate. Zn(2+) is bound at residue histidine 343. Cysteine 423, cysteine 426, and cysteine 431 together coordinate [4Fe-4S] cluster.

Belongs to the ThiC family. [4Fe-4S] cluster is required as a cofactor.

It catalyses the reaction 5-amino-1-(5-phospho-beta-D-ribosyl)imidazole + S-adenosyl-L-methionine = 4-amino-2-methyl-5-(phosphooxymethyl)pyrimidine + CO + 5'-deoxyadenosine + formate + L-methionine + 3 H(+). Its pathway is cofactor biosynthesis; thiamine diphosphate biosynthesis. Its function is as follows. Catalyzes the synthesis of the hydroxymethylpyrimidine phosphate (HMP-P) moiety of thiamine from aminoimidazole ribotide (AIR) in a radical S-adenosyl-L-methionine (SAM)-dependent reaction. The chain is Phosphomethylpyrimidine synthase from Prochlorococcus marinus (strain MIT 9301).